We begin with the raw amino-acid sequence, 143 residues long: Ribosome-binding factor A (143 aa).

Residues 123-143 form a disordered region; it reads DNSLQENYKDSDKETKVEKLR.

The protein belongs to the RbfA family. Monomer. Binds 30S ribosomal subunits, but not 50S ribosomal subunits or 70S ribosomes.

The protein localises to the cytoplasm. Its function is as follows. One of several proteins that assist in the late maturation steps of the functional core of the 30S ribosomal subunit. Associates with free 30S ribosomal subunits (but not with 30S subunits that are part of 70S ribosomes or polysomes). Required for efficient processing of 16S rRNA. May interact with the 5'-terminal helix region of 16S rRNA. The protein is Ribosome-binding factor A of Francisella philomiragia subsp. philomiragia (strain ATCC 25017 / CCUG 19701 / FSC 153 / O#319-036).